Here is a 244-residue protein sequence, read N- to C-terminus: Biosynthetic peptidoglycan transglycosylase (244 aa).

Residues 23 to 43 (LVVIGAWLAGILLFSFLPVPF) traverse the membrane as a helical segment.

Belongs to the glycosyltransferase 51 family.

The protein localises to the cell inner membrane. The enzyme catalyses [GlcNAc-(1-&gt;4)-Mur2Ac(oyl-L-Ala-gamma-D-Glu-L-Lys-D-Ala-D-Ala)](n)-di-trans,octa-cis-undecaprenyl diphosphate + beta-D-GlcNAc-(1-&gt;4)-Mur2Ac(oyl-L-Ala-gamma-D-Glu-L-Lys-D-Ala-D-Ala)-di-trans,octa-cis-undecaprenyl diphosphate = [GlcNAc-(1-&gt;4)-Mur2Ac(oyl-L-Ala-gamma-D-Glu-L-Lys-D-Ala-D-Ala)](n+1)-di-trans,octa-cis-undecaprenyl diphosphate + di-trans,octa-cis-undecaprenyl diphosphate + H(+). It functions in the pathway cell wall biogenesis; peptidoglycan biosynthesis. Functionally, peptidoglycan polymerase that catalyzes glycan chain elongation from lipid-linked precursors. The chain is Biosynthetic peptidoglycan transglycosylase from Pectobacterium carotovorum subsp. carotovorum (strain PC1).